Here is a 119-residue protein sequence, read N- to C-terminus: Small ribosomal subunit protein bS16 (119 aa).

Positions 81-119 are disordered; the sequence is GLAKRPARNNPKKAEPGQKAKERAAARAEKAGAGDDAAA. Over residues 92–113 the composition is skewed to basic and acidic residues; the sequence is KKAEPGQKAKERAAARAEKAGA.

It belongs to the bacterial ribosomal protein bS16 family.

This is Small ribosomal subunit protein bS16 from Methylobacterium sp. (strain 4-46).